Consider the following 468-residue polypeptide: Hepatocyte nuclear factor 3-alpha (468 aa).

A DNA-binding region (fork-head) is located at residues 169–260; it reads AKPPYSYISL…GNMFENGCYL (92 aa). The essential for DNA binding stretch occupies residues 251-288; it reads GNMFENGCYLRRQKRFKCEKQPGAGGGSGGGGSKGGPE. Residues 269–396 form a disordered region; the sequence is EKQPGAGGGS…DPHYSFNHPF (128 aa). A compositionally biased stretch (gly residues) spans 273–285; the sequence is GAGGGSGGGGSKG. 2 positions are modified to phosphoserine: Ser303 and Ser327. Low complexity-rich tracts occupy residues 318–328 and 347–365; these read GAPAPGPAASP and SPASSSAPPISSGPGALAS.

Binds DNA as a monomer. Interacts with FOXA2. Interacts with NKX2-1. Interacts with HDAC7. Interacts with the histone H3-H4 heterodimer. Associates with nucleosomes containing histone H2A. Interacts with AR. Interacts with NR0B2. Restricted mainly to endoderm-derived tissues (lung, liver, stomach, and small intestine). Expressed in the prostate.

It localises to the nucleus. In terms of biological role, transcription factor that is involved in embryonic development, establishment of tissue-specific gene expression and regulation of gene expression in differentiated tissues. Is thought to act as a 'pioneer' factor opening the compacted chromatin for other proteins through interactions with nucleosomal core histones and thereby replacing linker histones at target enhancer and/or promoter sites. Binds DNA with the consensus sequence 5'-[AC]A[AT]T[AG]TT[GT][AG][CT]T[CT]-3'. Proposed to play a role in translating the epigenetic signatures into cell type-specific enhancer-driven transcriptional programs. Involved in the development of multiple endoderm-derived organ systems such as the liver, pancreas, lungs and prostate; FOXA1 and FOXA2 seem to have at least in part redundant roles. Plays a role in prostate morphogenesis and epithelial cell differentiation. FOXA1 and FOXA2 are essential for hepatic specification. FOXA1 and FOXA2 are required for morphogenesis and cell differentiation during formation of the lung. FOXA1 and FOXA2 are involved in bile duct formation; they positively regulate the binding of glucocorticoid receptor/NR3C1 to the IL6 promoter. FOXA1 and FOXA2 regulate multiple phases of midbrain dopaminergic neuron development; they regulate expression of NEUROG2 at the beginning of mDA neurogenesis and of NR4A2 and EN1 in immature mDA neurons. Modulates the transcriptional activity of nuclear hormone receptors. Is involved in ESR1-mediated transcription. Inhibits NKX2-1-mediated transcription from the SFTPC promoter in lung epithel independently from DNA-binding. Involved in regulation of apoptosis. Involved in cell cycle regulation. Originally described as a transcription activator for a number of liver genes such as AFP, albumin, tyrosine aminotransferase, PEPCK, etc. Interacts with the cis-acting regulatory regions of these genes. Involved in glucose homeostasis; activates the GCG promoter. This Mus musculus (Mouse) protein is Hepatocyte nuclear factor 3-alpha (Foxa1).